Consider the following 169-residue polypeptide: MEHPMRKIRIEKVTLNIGVGESGEKLDKAYELLKRLTGQKPVKTKAKVRVEQWHIRPGLPIGVKVTLRGEKAYKILKEKLLPAVDFKIKASSFTDRGFGFGIPEYIMIPGMKYDPELGLIGLEAYVTLERPGYRVERRRIKRSKVGSRHRLNKEEIIKWAQEELGVQII.

This sequence belongs to the universal ribosomal protein uL5 family. As to quaternary structure, part of the 50S ribosomal subunit; contacts the 5S rRNA and probably tRNA. Forms a bridge to the 30S subunit in the 70S ribosome.

In terms of biological role, this is one of the proteins that bind and probably mediate the attachment of the 5S RNA into the large ribosomal subunit, where it forms part of the central protuberance. In the 70S ribosome it contacts protein S13 of the 30S subunit (bridge B1b), connecting the 2 subunits; this bridge is implicated in subunit movement. May contact the P site tRNA; the 5S rRNA and some of its associated proteins might help stabilize positioning of ribosome-bound tRNAs. The protein is Large ribosomal subunit protein uL5 of Nanoarchaeum equitans (strain Kin4-M).